Reading from the N-terminus, the 367-residue chain is Phosphoribosylaminoimidazole-succinocarboxamide synthase (367 aa).

This sequence belongs to the SAICAR synthetase family.

It catalyses the reaction 5-amino-1-(5-phospho-D-ribosyl)imidazole-4-carboxylate + L-aspartate + ATP = (2S)-2-[5-amino-1-(5-phospho-beta-D-ribosyl)imidazole-4-carboxamido]succinate + ADP + phosphate + 2 H(+). The protein operates within purine metabolism; IMP biosynthesis via de novo pathway; 5-amino-1-(5-phospho-D-ribosyl)imidazole-4-carboxamide from 5-amino-1-(5-phospho-D-ribosyl)imidazole-4-carboxylate: step 1/2. This chain is Phosphoribosylaminoimidazole-succinocarboxamide synthase, found in Shewanella baltica (strain OS185).